A 117-amino-acid polypeptide reads, in one-letter code: Fluoride-specific ion channel FluC 2 (117 aa).

Transmembrane regions (helical) follow at residues 4–24 (FLIG…GDII), 31–51 (KFPW…GIIT), 59–79 (LSMI…TFMY), and 94–114 (LIYI…GEFI). Na(+) contacts are provided by Gly69 and Thr72.

The protein belongs to the fluoride channel Fluc/FEX (TC 1.A.43) family.

It is found in the cell membrane. The catalysed reaction is fluoride(in) = fluoride(out). Its activity is regulated as follows. Na(+) is not transported, but it plays an essential structural role and its presence is essential for fluoride channel function. In terms of biological role, fluoride-specific ion channel. Important for reducing fluoride concentration in the cell, thus reducing its toxicity. The sequence is that of Fluoride-specific ion channel FluC 2 from Clostridium acetobutylicum (strain ATCC 824 / DSM 792 / JCM 1419 / IAM 19013 / LMG 5710 / NBRC 13948 / NRRL B-527 / VKM B-1787 / 2291 / W).